Reading from the N-terminus, the 437-residue chain is Sorting nexin-30 (437 aa).

Residues 1-45 are disordered; the sequence is MAGGPPKALPSTGPQSLRDMPHPLAGSSSEEAVGGDSTPSPDLLM. The residue at position 38 (threonine 38) is a Phosphothreonine. Serine 40 is modified (phosphoserine). The 122-residue stretch at 89 to 210 folds into the PX domain; sequence RDLFVTVDDP…VFLTAKDLNA (122 aa). Positions 132, 134, 162, and 176 each coordinate a 1,2-diacyl-sn-glycero-3-phospho-(1D-myo-inositol-3-phosphate). The 204-residue stretch at 234–437 folds into the BAR domain; sequence KLRSRPLEFA…PLLQEKQETK (204 aa).

The protein belongs to the sorting nexin family. As to quaternary structure, heterodimer; heterodimerizes with SNX4.

The protein localises to the early endosome membrane. Its function is as follows. Involved in the regulation of endocytosis and in several stages of intracellular trafficking. Together with SNX4, involved in autophagosome assembly. The chain is Sorting nexin-30 from Mus musculus (Mouse).